A 63-amino-acid polypeptide reads, in one-letter code: Large ribosomal subunit protein uL29 (63 aa).

It belongs to the universal ribosomal protein uL29 family.

This is Large ribosomal subunit protein uL29 from Pseudomonas aeruginosa (strain UCBPP-PA14).